A 323-amino-acid polypeptide reads, in one-letter code: Elongation factor P--(R)-beta-lysine ligase (323 aa).

Position 76–78 (76–78 (SPE)) interacts with substrate. ATP-binding positions include 100–102 (RNE) and asparagine 109. Tyrosine 118 is a binding site for substrate. 242-243 (EL) provides a ligand contact to ATP. Glutamate 249 contributes to the substrate binding site. Glycine 298 contacts ATP.

This sequence belongs to the class-II aminoacyl-tRNA synthetase family. EpmA subfamily. Homodimer.

It carries out the reaction D-beta-lysine + L-lysyl-[protein] + ATP = N(6)-((3R)-3,6-diaminohexanoyl)-L-lysyl-[protein] + AMP + diphosphate + H(+). With EpmB is involved in the beta-lysylation step of the post-translational modification of translation elongation factor P (EF-P). Catalyzes the ATP-dependent activation of (R)-beta-lysine produced by EpmB, forming a lysyl-adenylate, from which the beta-lysyl moiety is then transferred to the epsilon-amino group of a conserved specific lysine residue in EF-P. The chain is Elongation factor P--(R)-beta-lysine ligase from Haemophilus influenzae (strain ATCC 51907 / DSM 11121 / KW20 / Rd).